A 147-amino-acid polypeptide reads, in one-letter code: Ubiquitin-conjugating enzyme E2 D2 (147 aa).

A UBC core domain is found at 1-147 (MALKRIHKEL…SREWTQKYAM (147 aa)). Cysteine 85 functions as the Glycyl thioester intermediate in the catalytic mechanism.

This sequence belongs to the ubiquitin-conjugating enzyme family. As to quaternary structure, interacts with SCF (SKP1-CUL1-F-box protein) E3 ubiquitin ligase complex. Interacts with CNOT4 (via RING domain). Interacts with E3 ubiquitin-protein ligases CBLC, PJA1 and PJA2. Interacts with PDZRN3. Interacts with PPP1R11. Interacts with E3 ubiquitin-protein ligase PHF7; the interaction inhibits cleavage of PHF7 and promotes association of the complex with the nucleosome core particle.

It carries out the reaction S-ubiquitinyl-[E1 ubiquitin-activating enzyme]-L-cysteine + [E2 ubiquitin-conjugating enzyme]-L-cysteine = [E1 ubiquitin-activating enzyme]-L-cysteine + S-ubiquitinyl-[E2 ubiquitin-conjugating enzyme]-L-cysteine.. The catalysed reaction is S-ubiquitinyl-[E1 ubiquitin-activating enzyme]-L-cysteine + [acceptor protein]-L-lysine = [E1 ubiquitin-activating enzyme]-L-cysteine + N(6)-monoubiquitinyl-[acceptor protein]-L-lysine.. It participates in protein modification; protein ubiquitination. Functionally, accepts ubiquitin from the E1 complex and catalyzes its covalent attachment to other proteins. In vitro catalyzes 'Lys-48'-linked polyubiquitination. Mediates the selective degradation of short-lived and abnormal proteins. Functions in the E6/E6-AP-induced ubiquitination of p53/TP53. Mediates ubiquitination of PEX5 and SQSTM1 and autoubiquitination of STUB1 and TRAF6. Involved in the signal-induced conjugation and subsequent degradation of NFKBIA, FBXW2-mediated GCM1 ubiquitination and degradation, MDM2-dependent degradation of p53/TP53 and the activation of MAVS in the mitochondria by RIGI in response to viral infection. Essential for viral activation of IRF3. The polypeptide is Ubiquitin-conjugating enzyme E2 D2 (UBE2D2) (Sus scrofa (Pig)).